A 372-amino-acid polypeptide reads, in one-letter code: Pristinol synthase (372 aa).

Positions 1 to 12 are enriched in basic and acidic residues; that stretch reads MAHETTSGRRLP. Residues 1–23 are disordered; it reads MAHETTSGRRLPDPTSPSDPTRR. Mg(2+) contacts are provided by D100 and D104. Positions 100–104 match the DDXXD motif motif; it reads DDQFD. R197 is a binding site for substrate. 2 residues coordinate Mg(2+): N243 and S247. K250 contributes to the substrate binding site. Residue E251 participates in Mg(2+) binding. 337–338 serves as a coordination point for substrate; it reads RY. Positions 349 to 372 are disordered; it reads GRRRPWDGLTTATGTASPRHPRRA.

Belongs to the terpene synthase family. The cofactor is Mg(2+).

The catalysed reaction is (2E,6E)-farnesyl diphosphate + H2O = (+)-(2S,3R,9R)-pristinol + diphosphate. It participates in secondary metabolite biosynthesis; terpenoid biosynthesis. Functionally, catalyzes the conversion of (2E,6E)-farnesyl diphosphate (FPP) to yield a new 5-8 bicyclic (pristinane) sesquiterpenol (+)-(2S,3R,9R)-pristinol via a 1,11-cyclization, which requires the abstraction of the pyrophosphate from FPP to yield the humulyl cation. The only accepted substrate is farnesyl diphosphate (FPP). In Streptomyces pristinaespiralis (strain ATCC 25486 / DSM 40338 / CBS 914.69 / JCM 4507 / KCC S-0507 / NBRC 13074 / NRRL 2958 / 5647), this protein is Pristinol synthase.